Consider the following 176-residue polypeptide: MTTIVSVRRNGHVVIAGDGQATLGNTVMKGNVKKVRRLYNDKVIAGFAGGTADAFTLFELFERKLEMHQGHLVKAAVELAKDWRTDRMLRKLEALLAVADENASLIITGNGDVVQPENDLIAIGSGGPYAQAAARALLENTDMGARDIAEKALDIAGDICIYTNHFHTIEELPSKA.

T2 is a catalytic residue. G157, C160, and T163 together coordinate Na(+).

This sequence belongs to the peptidase T1B family. HslV subfamily. As to quaternary structure, a double ring-shaped homohexamer of HslV is capped on each side by a ring-shaped HslU homohexamer. The assembly of the HslU/HslV complex is dependent on binding of ATP.

It is found in the cytoplasm. The catalysed reaction is ATP-dependent cleavage of peptide bonds with broad specificity.. With respect to regulation, allosterically activated by HslU binding. In terms of biological role, protease subunit of a proteasome-like degradation complex believed to be a general protein degrading machinery. This chain is ATP-dependent protease subunit HslV, found in Klebsiella pneumoniae (strain 342).